The primary structure comprises 701 residues: Reverse gyrase subunit A (701 aa).

The region spanning Met41–Val197 is the Toprim domain. Glu47 lines the Mg(2+) pocket. An RG C-terminal-type zinc finger spans residues Ile117–Asp143. Residues Cys120, Cys123, Cys133, and Cys136 each contribute to the Zn(2+) site. Position 166 (Asp166) interacts with Mg(2+). The Topo IA-type catalytic domain maps to Asn213 to Trp602. Residue Tyr352 is the O-(5'-phospho-DNA)-tyrosine intermediate of the active site.

It belongs to the type IA topoisomerase family. Heterodimer of an RgyA and RgyB subunit. Zn(2+) is required as a cofactor. Mg(2+) serves as cofactor.

It localises to the cytoplasm. Modifies the topological state of DNA by introducing positive supercoils in an ATP-dependent process. Binds to single-stranded DNA, transiently cleaves and then rejoins the end, introducing a positive supercoil in the process. The scissile phosphodiester is attacked by the catalytic tyrosine of the enzyme, resulting in the formation of a DNA-(5'-phosphotyrosyl)-enzyme intermediate. Probably involved in rewinding DNA strands in regions of the chromosome that have opened up to allow replication, transcription, DNA repair or for DNA protection. Reconstituted holoenzyme binds dsDNA a bit better than ssDNA, this subunit preferentially binds ssDNA. In isolation this subunit relaxes negatively-supercoiled DNA, and stimulates the endogenous ATPase activity of the RgyB subunit. This is Reverse gyrase subunit A from Nanoarchaeum equitans (strain Kin4-M).